Here is a 247-residue protein sequence, read N- to C-terminus: Protein McbF (247 aa).

Positions 6–234 (LEINSLSFSY…NNETTQKRHL (229 aa)) constitute an ABC transporter domain. 40–47 (GENPAGKT) provides a ligand contact to ATP.

Belongs to the ABC transporter superfamily.

Together with two further proteins McbE and McbG this protein causes immunity to the peptide antibiotic microcin B17, which inhibits DNA replication in enterobacteriaceae. Immunity is determined by two different mechanisms. McbE is involved in the production of extracellular MccB17 and, in a complex with mcbf it also serves as 'pump' for the export of active MccB17 from the cytoplasm to the periplasmic space. This is Protein McbF (mcbF) from Escherichia coli.